The chain runs to 112 residues: Nitrogen regulatory protein GlnK2 (112 aa).

ADP is bound by residues Thr29, 37–39, Val64, and 87–90; these read GVQ and GDGK. ATP is bound by residues Thr29, 37-39, Val64, and 87-90; these read GVQ and GDGK.

The protein belongs to the P(II) protein family. In terms of assembly, homotrimer. Interacts and forms a complex with Amt2.

The protein localises to the cytoplasm. Functionally, involved in the regulation of nitrogen metabolism. Regulates the activity of its targets by protein-protein interaction in response to the nitrogen status of the cell. Regulates the activity of the ammonia channel Amt2 via direct interaction. In Methanocaldococcus jannaschii (strain ATCC 43067 / DSM 2661 / JAL-1 / JCM 10045 / NBRC 100440) (Methanococcus jannaschii), this protein is Nitrogen regulatory protein GlnK2.